The chain runs to 542 residues: Importin subunit alpha-1 (542 aa).

The segment at 1–29 (MSASSRFIPEHRRQNYKGKGTFQADELRR) is disordered. The region spanning 1 to 60 (MSASSRFIPEHRRQNYKGKGTFQADELRRRRETQQIEIRKQKREENLNKRRNLVDVQEPA) is the IBB domain. 8 ARM repeats span residues 114 to 155 (IQKV…SSNQ), 156 to 197 (THVV…SPMC), 198 to 240 (RDHV…KNPQ), 241 to 282 (PDWN…ANEK), 283 to 324 (IQAI…DDVQ), 325 to 366 (TQVI…NSSQ), 367 to 408 (IQYV…GARR), and 409 to 453 (PDQI…GELD).

It belongs to the importin alpha family. As to quaternary structure, interacts with pap1.

Its subcellular location is the nucleus. In terms of biological role, binds specifically and directly to substrates containing either a simple or bipartite NLS motif. Promotes docking of import substrates to the nuclear envelope. Seems to act as a cytosolic receptor for both simple and bipartite NLS motifs. Has an essential role in mitotic chromosome condensation. Involved in nuclear protein import. Required for efficient nuclear import of both an SV40 nuclear localization signal-containing reporter protein and the pap1 component of the stress response MAP kinase pathway. Required for proper mitotic progression. This chain is Importin subunit alpha-1 (cut15), found in Schizosaccharomyces pombe (strain 972 / ATCC 24843) (Fission yeast).